We begin with the raw amino-acid sequence, 87 residues long: Bombyxin B-10 (87 aa).

An N-terminal signal peptide occupies residues methionine 1–alanine 19. 3 disulfide bridges follow: cysteine 27–cysteine 73, cysteine 39–cysteine 86, and cysteine 72–cysteine 77. Positions serine 46–glycine 64 are cleaved as a propeptide — bombyxin B-10 C peptide.

This sequence belongs to the insulin family. In terms of assembly, heterodimer of a B chain and an A chain linked by two disulfide bonds.

It localises to the secreted. Functionally, brain peptide responsible for activation of prothoracic glands to produce ecdysone in insects. This Bombyx mori (Silk moth) protein is Bombyxin B-10 (BBXB10).